The chain runs to 162 residues: Endoribonuclease YbeY (162 aa).

Positions 130, 134, and 140 each coordinate Zn(2+).

This sequence belongs to the endoribonuclease YbeY family. Requires Zn(2+) as cofactor.

The protein resides in the cytoplasm. Its function is as follows. Single strand-specific metallo-endoribonuclease involved in late-stage 70S ribosome quality control and in maturation of the 3' terminus of the 16S rRNA. The sequence is that of Endoribonuclease YbeY from Nitratidesulfovibrio vulgaris (strain ATCC 29579 / DSM 644 / CCUG 34227 / NCIMB 8303 / VKM B-1760 / Hildenborough) (Desulfovibrio vulgaris).